Here is a 131-residue protein sequence, read N- to C-terminus: Large ribosomal subunit protein bL19 (131 aa).

This sequence belongs to the bacterial ribosomal protein bL19 family.

In terms of biological role, this protein is located at the 30S-50S ribosomal subunit interface and may play a role in the structure and function of the aminoacyl-tRNA binding site. The protein is Large ribosomal subunit protein bL19 of Rhodopseudomonas palustris (strain HaA2).